Consider the following 49-residue polypeptide: Large ribosomal subunit protein bL33B (49 aa).

Belongs to the bacterial ribosomal protein bL33 family.

This is Large ribosomal subunit protein bL33B from Shouchella clausii (strain KSM-K16) (Alkalihalobacillus clausii).